Consider the following 512-residue polypeptide: Sodium/proline symporter (512 aa).

Helical transmembrane passes span 16-36 (WQTY…GFYG), 54-74 (IGPY…WMIM), 85-105 (LSAM…YFVV), 139-159 (IISG…GFVS), 174-194 (FGLI…GYLA), 200-220 (FFQG…AMMN), 240-260 (LFKG…LGYF), 286-306 (ISWM…GIAF), 327-347 (VLFH…AIMS), 381-401 (FVMI…AIAW), 410-430 (LVGN…LFAL), 438-458 (AGAV…IAWI), and 467-487 (IFGL…TYVV).

The protein belongs to the sodium:solute symporter (SSF) (TC 2.A.21) family.

The protein localises to the cell membrane. It catalyses the reaction L-proline(in) + Na(+)(in) = L-proline(out) + Na(+)(out). Its function is as follows. Catalyzes the sodium-dependent uptake of extracellular L-proline. Since most S.aureus strains are L-proline auxotrophs, this transporter may aid the bacterial persistence during an infection of tissues with low proline concentrations. The chain is Sodium/proline symporter (putP) from Staphylococcus aureus (strain Mu3 / ATCC 700698).